A 1128-amino-acid polypeptide reads, in one-letter code: DNA-directed RNA polymerase subunit Rpo2 (1128 aa).

DsDNA-binding positions include Lys178, 181 to 182, Lys206, 435 to 439, and 1027 to 1032; these read SN, RGQPN, and RFGEME. Zn(2+)-binding residues include Cys1061, Cys1064, Cys1079, and His1082.

Belongs to the RNA polymerase beta chain family. As to quaternary structure, part of the 13-subunit RNA polymerase complex. Zn(2+) serves as cofactor.

It is found in the cytoplasm. It catalyses the reaction RNA(n) + a ribonucleoside 5'-triphosphate = RNA(n+1) + diphosphate. DNA-dependent RNA polymerase (RNAP) catalyzes the transcription of DNA into RNA using the four ribonucleoside triphosphates as substrates. This subunit is involved in DNA promoter recognition. The polypeptide is DNA-directed RNA polymerase subunit Rpo2 (Saccharolobus shibatae (strain ATCC 51178 / DSM 5389 / JCM 8931 / NBRC 15437 / B12) (Sulfolobus shibatae)).